The chain runs to 141 residues: Sporulation-specific cell division protein SsgB (141 aa).

The protein belongs to the SsgA family. Interacts with SsgA. Interacts with FtsZ (via N-terminus).

It localises to the cell septum. Its function is as follows. Involved in sporulation-specific cell division. Required for early stages of sporulation. Important in the process of growth cessation prior to sporulation-specific cell division. Recruits cell division protein FtsZ to the future septum sites and tethers the contractile ring structure (Z ring) to the cytoplasmic membrane during sporulation. Stimulates polymerization and filament length of FtsZ in vitro. The polypeptide is Sporulation-specific cell division protein SsgB (Saccharopolyspora erythraea (strain ATCC 11635 / DSM 40517 / JCM 4748 / NBRC 13426 / NCIMB 8594 / NRRL 2338)).